We begin with the raw amino-acid sequence, 703 residues long: Cycloartenol synthase (703 aa).

PFTB repeat units lie at residues 59 to 103 and 106 to 148; these read IKKA…QLPE and QREI…RLLG. The Proton donor role is filled by D435. PFTB repeat units lie at residues 461-503, 539-579, 587-628, and 645-686; these read IADG…QNIM, IARG…VASG, IVKA…VNTG, and IERG…KNIF.

Belongs to the terpene cyclase/mutase family.

The catalysed reaction is (S)-2,3-epoxysqualene = cycloartenol. Functionally, converts oxidosqualene to cycloartenol (in vitro). In Dictyostelium discoideum (Social amoeba), this protein is Cycloartenol synthase (cas1).